Here is a 236-residue protein sequence, read N- to C-terminus: Purine nucleoside phosphorylase DeoD-type 2 (236 aa).

Histidine 5 is an a purine D-ribonucleoside binding site. Residues glycine 21, arginine 25, arginine 44, and 88-91 (RVGS) each bind phosphate. A purine D-ribonucleoside is bound by residues 180 to 182 (DME) and 204 to 205 (SD). Residue aspartate 205 is the Proton donor of the active site.

It belongs to the PNP/UDP phosphorylase family. Homohexamer; trimer of homodimers.

It carries out the reaction a purine D-ribonucleoside + phosphate = a purine nucleobase + alpha-D-ribose 1-phosphate. The enzyme catalyses a purine 2'-deoxy-D-ribonucleoside + phosphate = a purine nucleobase + 2-deoxy-alpha-D-ribose 1-phosphate. Catalyzes the reversible phosphorolytic breakdown of the N-glycosidic bond in the beta-(deoxy)ribonucleoside molecules, with the formation of the corresponding free purine bases and pentose-1-phosphate. This is Purine nucleoside phosphorylase DeoD-type 2 from Photobacterium profundum (strain SS9).